A 31-amino-acid polypeptide reads, in one-letter code: Hemocyanin subunit 1 (31 aa).

Belongs to the tyrosinase family. Hemocyanin subfamily. In terms of tissue distribution, hemolymph.

Its subcellular location is the secreted. It localises to the extracellular space. Hemocyanins are copper-containing oxygen carriers occurring freely dissolved in the hemolymph of many mollusks and arthropods. The protein is Hemocyanin subunit 1 of Homarus americanus (American lobster).